Here is a 1140-residue protein sequence, read N- to C-terminus: Kinesin-like protein KIN-14O (1140 aa).

Residues 1 to 12 show a composition bias toward basic and acidic residues; it reads MLESEFQREHAF. Disordered stretches follow at residues 1–37, 50–81, 161–217, and 323–347; these read MLESEFQREHAFESATEQELTCPISDNLHESVEADDD, NPAESCESEEIQTKALPSSSSGQDLVASDEDS, SPGS…GGHK, and ASGTSEENETEKSKLEEKKKDKEED. Positions 161-179 are enriched in low complexity; that stretch reads SPGSSHGGSTPRSPFSPSS. Basic and acidic residues predominate over residues 180–193; that stretch reads PRERHNKGLADSRF. Polar residues predominate over residues 197 to 209; it reads LPNSSALDPSSPG. The stretch at 327 to 546 forms a coiled coil; it reads SEENETEKSK…KAKEMEEKSE (220 aa). The segment covering 332–347 has biased composition (basic and acidic residues); the sequence is TEKSKLEEKKKDKEED. Residues 632–952 enclose the Kinesin motor domain; it reads NIRVYCRVRP…LKFAERVSGV (321 aa). 716 to 723 is an ATP binding site; sequence GQTGSGKT. The span at 1002–1018 shows a compositional bias: polar residues; sequence LGQSDDFNSEAGDSQLS. Disordered stretches follow at residues 1002–1021 and 1028–1140; these read LGQSDDFNSEAGDSQLSIED and DYTR…KRWS. Basic and acidic residues predominate over residues 1066–1078; it reads EGRKPLKISDKPK. Residues 1099–1130 are compositionally biased toward polar residues; sequence TMRTTNIAKATSALLSPSSQGMKKTGSASNFL.

The protein belongs to the TRAFAC class myosin-kinesin ATPase superfamily. Kinesin family. KIN-14 subfamily.

The sequence is that of Kinesin-like protein KIN-14O from Arabidopsis thaliana (Mouse-ear cress).